A 232-amino-acid polypeptide reads, in one-letter code: Large ribosomal subunit protein uL1 (232 aa).

It belongs to the universal ribosomal protein uL1 family. As to quaternary structure, part of the 50S ribosomal subunit.

Binds directly to 23S rRNA. The L1 stalk is quite mobile in the ribosome, and is involved in E site tRNA release. In terms of biological role, protein L1 is also a translational repressor protein, it controls the translation of the L11 operon by binding to its mRNA. This is Large ribosomal subunit protein uL1 from Bacillus licheniformis (strain ATCC 14580 / DSM 13 / JCM 2505 / CCUG 7422 / NBRC 12200 / NCIMB 9375 / NCTC 10341 / NRRL NRS-1264 / Gibson 46).